The chain runs to 549 residues: Cytoplasmic trehalase (549 aa).

Substrate is bound by residues Arg-168, 175-176 (WD), Asn-212, 221-223 (RSQ), 292-294 (RDE), and Gly-324. Catalysis depends on proton donor/acceptor residues Asp-326 and Glu-509. Position 525 (Glu-525) interacts with substrate.

This sequence belongs to the glycosyl hydrolase 37 family. Monomer.

It localises to the cytoplasm. It catalyses the reaction alpha,alpha-trehalose + H2O = alpha-D-glucose + beta-D-glucose. It participates in glycan degradation; trehalose degradation; D-glucose from alpha,alpha-trehalose: step 1/1. Its function is as follows. Hydrolyzes trehalose to glucose. Could be involved, in cells returning to low osmolarity conditions, in the utilization of the accumulated cytoplasmic trehalose, which was synthesized in response to high osmolarity. The polypeptide is Cytoplasmic trehalase (Escherichia coli O127:H6 (strain E2348/69 / EPEC)).